A 792-amino-acid polypeptide reads, in one-letter code: 5-methyltetrahydropteroyltriglutamate--homocysteine methyltransferase (792 aa).

5-methyltetrahydropteroyltri-L-glutamate contacts are provided by residues 16 to 19 (RELK) and Lys-112. L-homocysteine-binding positions include 432–434 (IGS) and Glu-485. L-methionine is bound by residues 432-434 (IGS) and Glu-485. Residues 516 to 517 (RC) and Trp-562 each bind 5-methyltetrahydropteroyltri-L-glutamate. L-homocysteine is bound at residue Asp-600. Residue Asp-600 coordinates L-methionine. Glu-606 serves as a coordination point for 5-methyltetrahydropteroyltri-L-glutamate. Zn(2+)-binding residues include His-642, Cys-644, and Glu-666. His-695 acts as the Proton donor in catalysis. Zn(2+) is bound at residue Cys-727.

The protein belongs to the vitamin-B12 independent methionine synthase family. Zn(2+) is required as a cofactor.

The catalysed reaction is 5-methyltetrahydropteroyltri-L-glutamate + L-homocysteine = tetrahydropteroyltri-L-glutamate + L-methionine. It participates in amino-acid biosynthesis; L-methionine biosynthesis via de novo pathway; L-methionine from L-homocysteine (MetE route): step 1/1. Its function is as follows. Catalyzes the transfer of a methyl group from 5-methyltetrahydrofolate to homocysteine resulting in methionine formation. This is 5-methyltetrahydropteroyltriglutamate--homocysteine methyltransferase from Cupriavidus necator (strain ATCC 17699 / DSM 428 / KCTC 22496 / NCIMB 10442 / H16 / Stanier 337) (Ralstonia eutropha).